Consider the following 1369-residue polypeptide: DNA-directed RNA polymerase subunit beta (1369 aa).

Belongs to the RNA polymerase beta chain family. In terms of assembly, the RNAP catalytic core consists of 2 alpha, 1 beta, 1 beta' and 1 omega subunit. When a sigma factor is associated with the core the holoenzyme is formed, which can initiate transcription.

It catalyses the reaction RNA(n) + a ribonucleoside 5'-triphosphate = RNA(n+1) + diphosphate. In terms of biological role, DNA-dependent RNA polymerase catalyzes the transcription of DNA into RNA using the four ribonucleoside triphosphates as substrates. This chain is DNA-directed RNA polymerase subunit beta, found in Solidesulfovibrio magneticus (strain ATCC 700980 / DSM 13731 / RS-1) (Desulfovibrio magneticus).